The following is a 447-amino-acid chain: Protein king tubby (447 aa).

The segment at 54 to 84 is disordered; the sequence is GSPQNPDQILSNNSSSITMNSSRNNSNNMRS. The segment covering 62 to 84 has biased composition (low complexity); it reads ILSNNSSSITMNSSRNNSNNMRS. S136 carries the post-translational modification Phosphoserine. Low complexity predominate over residues 168–182; it reads EGAAMEGSNGAANGS. A disordered region spans residues 168–191; it reads EGAAMEGSNGAANGSGSVGGSGES.

Belongs to the TUB family.

Its subcellular location is the cytoplasm. It localises to the nucleus. It is found in the cell projection. The protein resides in the cilium membrane. The protein localises to the rhabdomere. This is Protein king tubby from Drosophila grimshawi (Hawaiian fruit fly).